Consider the following 186-residue polypeptide: Transcriptional repressor NrdR (186 aa).

The segment at 3 to 34 (CPFCRHPDSRVVDSREAEEGAAIRRRRSCPAC) is a zinc-finger region. An ATP-cone domain is found at 46–136 (LRVRKRSGAT…VYLAFESLGD (91 aa)). The tract at residues 149–169 (AGGGEPPVAGKPTTMPAATGA) is disordered.

Belongs to the NrdR family. The cofactor is Zn(2+).

Negatively regulates transcription of bacterial ribonucleotide reductase nrd genes and operons by binding to NrdR-boxes. The polypeptide is Transcriptional repressor NrdR (Parafrankia sp. (strain EAN1pec)).